The chain runs to 165 residues: Large ribosomal subunit protein uL11 (165 aa).

At Ser38 the chain carries Phosphoserine. Residue Lys40 forms a Glycyl lysine isopeptide (Lys-Gly) (interchain with G-Cter in SUMO2) linkage. Lys48 is covalently cross-linked (Glycyl lysine isopeptide (Lys-Gly) (interchain with G-Cter in ubiquitin)). An N6-acetyllysine modification is found at Lys54. Residue Lys83 forms a Glycyl lysine isopeptide (Lys-Gly) (interchain with G-Cter in ubiquitin) linkage. Ser165 bears the Phosphoserine mark.

The protein belongs to the universal ribosomal protein uL11 family. Component of the large ribosomal subunit. Mature ribosomes consist of a small (40S) and a large (60S) subunit. The 40S subunit contains about 33 different proteins and 1 molecule of RNA (18S). The 60S subunit contains about 49 different proteins and 3 molecules of RNA (28S, 5.8S and 5S). Post-translationally, ubiquitinated at Lys-48 and Lys-83 by RNF14 and RNF25 in response to ribosome collisions (ribosome stalling).

The protein localises to the cytoplasm. Component of the large ribosomal subunit. The ribosome is a large ribonucleoprotein complex responsible for the synthesis of proteins in the cell. Binds directly to 26S ribosomal RNA. This chain is Large ribosomal subunit protein uL11 (RPL12), found in Bos taurus (Bovine).